The following is a 212-amino-acid chain: Ribonuclease HII (212 aa).

Residues 2-206 (TPLVGVDEAG…CERIRAEAEQ (205 aa)) enclose the RNase H type-2 domain. Positions 8, 9, and 101 each coordinate a divalent metal cation.

It belongs to the RNase HII family. Mn(2+) serves as cofactor. It depends on Mg(2+) as a cofactor.

The protein resides in the cytoplasm. It carries out the reaction Endonucleolytic cleavage to 5'-phosphomonoester.. Functionally, endonuclease that specifically degrades the RNA of RNA-DNA hybrids. In Natronomonas pharaonis (strain ATCC 35678 / DSM 2160 / CIP 103997 / JCM 8858 / NBRC 14720 / NCIMB 2260 / Gabara) (Halobacterium pharaonis), this protein is Ribonuclease HII.